The chain runs to 354 residues: 3-dehydroquinate synthase (354 aa).

NAD(+)-binding positions include 100–104, 124–125, Lys-136, Lys-145, and 163–166; these read GATGD, TT, and FLKT. 3 residues coordinate Zn(2+): Glu-178, His-242, and His-256.

This sequence belongs to the sugar phosphate cyclases superfamily. Dehydroquinate synthase family. Co(2+) serves as cofactor. Zn(2+) is required as a cofactor. Requires NAD(+) as cofactor.

It localises to the cytoplasm. The enzyme catalyses 7-phospho-2-dehydro-3-deoxy-D-arabino-heptonate = 3-dehydroquinate + phosphate. It functions in the pathway metabolic intermediate biosynthesis; chorismate biosynthesis; chorismate from D-erythrose 4-phosphate and phosphoenolpyruvate: step 2/7. Its function is as follows. Catalyzes the conversion of 3-deoxy-D-arabino-heptulosonate 7-phosphate (DAHP) to dehydroquinate (DHQ). In Staphylococcus aureus (strain NCTC 8325 / PS 47), this protein is 3-dehydroquinate synthase.